The following is a 346-amino-acid chain: tRNA N6-adenosine threonylcarbamoyltransferase (346 aa).

Fe cation is bound by residues H109, H113, and Y135. Substrate is bound by residues 135 to 139, D167, G180, E184, and N263; that span reads YVSGG. D291 contributes to the Fe cation binding site.

This sequence belongs to the KAE1 / TsaD family. Monomer. Component of the KEOPS complex that consists of Kae1, Bud32, Cgi121 and Pcc1; the whole complex dimerizes. Fe(2+) serves as cofactor.

It localises to the cytoplasm. The enzyme catalyses L-threonylcarbamoyladenylate + adenosine(37) in tRNA = N(6)-L-threonylcarbamoyladenosine(37) in tRNA + AMP + H(+). Required for the formation of a threonylcarbamoyl group on adenosine at position 37 (t(6)A37) in tRNAs that read codons beginning with adenine. Is a component of the KEOPS complex that is probably involved in the transfer of the threonylcarbamoyl moiety of threonylcarbamoyl-AMP (TC-AMP) to the N6 group of A37. Kae1 likely plays a direct catalytic role in this reaction, but requires other protein(s) of the complex to fulfill this activity. This Methanopyrus kandleri (strain AV19 / DSM 6324 / JCM 9639 / NBRC 100938) protein is tRNA N6-adenosine threonylcarbamoyltransferase.